A 557-amino-acid chain; its full sequence is Urocanate hydratase (557 aa).

NAD(+) contacts are provided by residues 52–53, Gln130, 176–178, Glu196, 242–243, 263–267, 273–274, and Tyr322; these read GG, GMG, NA, QTSAH, and YL. Cys410 is a catalytic residue. Residue Gly492 coordinates NAD(+).

Belongs to the urocanase family. NAD(+) is required as a cofactor.

It localises to the cytoplasm. It carries out the reaction 4-imidazolone-5-propanoate = trans-urocanate + H2O. It functions in the pathway amino-acid degradation; L-histidine degradation into L-glutamate; N-formimidoyl-L-glutamate from L-histidine: step 2/3. Catalyzes the conversion of urocanate to 4-imidazolone-5-propionate. The chain is Urocanate hydratase from Rhizobium meliloti (strain 1021) (Ensifer meliloti).